We begin with the raw amino-acid sequence, 475 residues long: Ribulose bisphosphate carboxylase large chain (475 aa).

The propeptide occupies 1 to 2 (MS). The residue at position 3 (Pro-3) is an N-acetylproline. Lys-14 is subject to N6,N6,N6-trimethyllysine. Asn-123 and Thr-173 together coordinate substrate. Lys-175 serves as the catalytic Proton acceptor. Lys-177 contributes to the substrate binding site. Residues Lys-201, Asp-203, and Glu-204 each coordinate Mg(2+). An N6-carboxylysine modification is found at Lys-201. His-294 (proton acceptor) is an active-site residue. Residues Arg-295, His-327, and Ser-379 each contribute to the substrate site.

It belongs to the RuBisCO large chain family. Type I subfamily. Heterohexadecamer of 8 large chains and 8 small chains; disulfide-linked. The disulfide link is formed within the large subunit homodimers. Requires Mg(2+) as cofactor. Post-translationally, the disulfide bond which can form in the large chain dimeric partners within the hexadecamer appears to be associated with oxidative stress and protein turnover.

It localises to the plastid. The protein localises to the chloroplast. It carries out the reaction 2 (2R)-3-phosphoglycerate + 2 H(+) = D-ribulose 1,5-bisphosphate + CO2 + H2O. The catalysed reaction is D-ribulose 1,5-bisphosphate + O2 = 2-phosphoglycolate + (2R)-3-phosphoglycerate + 2 H(+). Functionally, ruBisCO catalyzes two reactions: the carboxylation of D-ribulose 1,5-bisphosphate, the primary event in carbon dioxide fixation, as well as the oxidative fragmentation of the pentose substrate in the photorespiration process. Both reactions occur simultaneously and in competition at the same active site. The chain is Ribulose bisphosphate carboxylase large chain from Chloranthus spicatus (Chulantree).